The following is a 212-amino-acid chain: Large ribosomal subunit protein bL25 (212 aa).

Positions 181–212 are disordered; it reads LSEPKEEVIEEDVEEVSADVPTVSETEEEDAE. Acidic residues predominate over residues 188–197; that stretch reads VIEEDVEEVS.

This sequence belongs to the bacterial ribosomal protein bL25 family. CTC subfamily. In terms of assembly, part of the 50S ribosomal subunit; part of the 5S rRNA/L5/L18/L25 subcomplex. Contacts the 5S rRNA. Binds to the 5S rRNA independently of L5 and L18.

Functionally, this is one of the proteins that binds to the 5S RNA in the ribosome where it forms part of the central protuberance. This Finegoldia magna (strain ATCC 29328 / DSM 20472 / WAL 2508) (Peptostreptococcus magnus) protein is Large ribosomal subunit protein bL25.